We begin with the raw amino-acid sequence, 515 residues long: Spermatogenesis-associated protein 2 (515 aa).

The region spanning 78–150 (ALHCAFSMLE…VYKLKELVES (73 aa)) is the PUB domain. The short motif at 321–338 (TYFSTQDDVDLYTDSEPR) is the PIM motif element. The tract at residues 429-452 (GHQTQGLDRLAPVHSKPKPSTTAT) is disordered.

Belongs to the SPATA2 family. In terms of assembly, interacts (via the PIM motif) with RNF31/HOIP (via the PUB domain); the interaction is direct. Interacts (via the PUB domain) with CYLD; the interaction is direct. In terms of tissue distribution, widely expressed, with highest expression in testis, lung and intestine, and lower expression in brain, heart and spleen. Present at high level in Sertoli cells: expressed from stage I to stage XII of the testis seminiferous epithelium (at protein level).

The protein resides in the cytoplasm. It localises to the nucleus. Functionally, bridging factor that mediates the recruitment of CYLD to the LUBAC complex, thereby regulating TNF-alpha-induced necroptosis. Acts as a direct binding intermediate that bridges RNF31/HOIP, the catalytic subunit of the LUBAC complex, and the deubiquitinase (CYLD), thereby recruiting CYLD to the TNF-R1 signaling complex (TNF-RSC). Required to activate the 'Met-1'- (linear) and 'Lys-63'-linked deubiquitinase activities of CYLD. Controls the kinase activity of RIPK1 and TNF-alpha-induced necroptosis by promoting 'Met-1'-linked deubiquitination of RIPK1 by CYLD. The polypeptide is Spermatogenesis-associated protein 2 (Mus musculus (Mouse)).